Consider the following 86-residue polypeptide: Small ribosomal subunit protein bS20 (86 aa).

Belongs to the bacterial ribosomal protein bS20 family.

Functionally, binds directly to 16S ribosomal RNA. In Kocuria rhizophila (strain ATCC 9341 / DSM 348 / NBRC 103217 / DC2201), this protein is Small ribosomal subunit protein bS20.